A 597-amino-acid chain; its full sequence is Elongation factor 4 (597 aa).

Residues 2–184 (KNIRNFSIIA…EIVAKIPAPT (183 aa)) form the tr-type G domain. GTP contacts are provided by residues 14 to 19 (DHGKST) and 131 to 134 (NKID).

Belongs to the TRAFAC class translation factor GTPase superfamily. Classic translation factor GTPase family. LepA subfamily.

The protein resides in the cell inner membrane. It carries out the reaction GTP + H2O = GDP + phosphate + H(+). Required for accurate and efficient protein synthesis under certain stress conditions. May act as a fidelity factor of the translation reaction, by catalyzing a one-codon backward translocation of tRNAs on improperly translocated ribosomes. Back-translocation proceeds from a post-translocation (POST) complex to a pre-translocation (PRE) complex, thus giving elongation factor G a second chance to translocate the tRNAs correctly. Binds to ribosomes in a GTP-dependent manner. The chain is Elongation factor 4 from Neisseria meningitidis serogroup C (strain 053442).